We begin with the raw amino-acid sequence, 675 residues long: Rho guanine nucleotide exchange factor 37 (675 aa).

The interval methionine 1 to arginine 26 is disordered. The DH domain maps to histidine 30–tyrosine 213. The BAR domain maps to leucine 254–alanine 455. 2 consecutive SH3 domains span residues glycine 506–valine 569 and proline 602–serine 665.

Its function is as follows. May act as a guanine nucleotide exchange factor (GEF). This Homo sapiens (Human) protein is Rho guanine nucleotide exchange factor 37 (ARHGEF37).